The following is a 139-amino-acid chain: Probable cytochrome b5 (139 aa).

The Cytochrome b5 heme-binding domain occupies 2-78; it reads SAEFTYQDVA…LEPLLVGTLK (77 aa). Heme is bound by residues H37 and H61. The helical transmembrane segment at 105–125 threads the bilayer; sequence GLGIGLYAVLVLGGLAGFAAY.

The protein belongs to the cytochrome b5 family.

The protein localises to the endoplasmic reticulum membrane. It is found in the microsome membrane. Functionally, membrane bound hemoprotein which function as an electron carrier for several membrane bound oxygenases. This Neurospora crassa (strain ATCC 24698 / 74-OR23-1A / CBS 708.71 / DSM 1257 / FGSC 987) protein is Probable cytochrome b5.